A 644-amino-acid polypeptide reads, in one-letter code: Macrolide export ATP-binding/permease protein MacB (644 aa).

One can recognise an ABC transporter domain in the interval Ile-4 to Ala-242. Gly-40–Ser-47 is a binding site for ATP. A run of 4 helical transmembrane segments spans residues Leu-270–Gly-290, Ile-524–Val-544, Leu-574–Phe-594, and Ala-607–Met-627.

Belongs to the ABC transporter superfamily. Macrolide exporter (TC 3.A.1.122) family. In terms of assembly, homodimer.

Its subcellular location is the cell inner membrane. In terms of biological role, non-canonical ABC transporter that contains transmembrane domains (TMD), which form a pore in the inner membrane, and an ATP-binding domain (NBD), which is responsible for energy generation. Overexpression confers resistance against macrolides. The chain is Macrolide export ATP-binding/permease protein MacB from Neisseria gonorrhoeae.